Here is a 463-residue protein sequence, read N- to C-terminus: uncharacterized protein (463 aa).

6 helical membrane-spanning segments follow: residues 3 to 23 (IPPE…SLLV), 88 to 108 (VAAA…AELA), 112 to 132 (AIHG…PIAL), 216 to 236 (FSPA…DFLW), 245 to 265 (LLLL…SALI), and 276 to 296 (LPIA…AVAV). The disordered stretch occupies residues 303–322 (VPGGSPPTSNPAPAAPSSNS). Residues 306 to 316 (GSPPTSNPAPA) are compositionally biased toward pro residues. A run of 2 helical transmembrane segments spans residues 323-343 (VGSA…APPG) and 419-439 (AGTL…AGMV).

The protein belongs to the mycobacterial PPE family.

It is found in the cell membrane. This is an uncharacterized protein from Mycobacterium tuberculosis (strain CDC 1551 / Oshkosh).